A 613-amino-acid chain; its full sequence is Dihydroxy-acid dehydratase (613 aa).

Residue Asp-81 participates in Mg(2+) binding. Cys-122 is a [2Fe-2S] cluster binding site. Residues Asp-123 and Lys-124 each coordinate Mg(2+). Lys-124 is subject to N6-carboxylysine. Residue Cys-195 coordinates [2Fe-2S] cluster. Glu-491 provides a ligand contact to Mg(2+). The active-site Proton acceptor is Ser-517.

The protein belongs to the IlvD/Edd family. As to quaternary structure, homodimer. [2Fe-2S] cluster serves as cofactor. The cofactor is Mg(2+).

The enzyme catalyses (2R)-2,3-dihydroxy-3-methylbutanoate = 3-methyl-2-oxobutanoate + H2O. It catalyses the reaction (2R,3R)-2,3-dihydroxy-3-methylpentanoate = (S)-3-methyl-2-oxopentanoate + H2O. Its pathway is amino-acid biosynthesis; L-isoleucine biosynthesis; L-isoleucine from 2-oxobutanoate: step 3/4. The protein operates within amino-acid biosynthesis; L-valine biosynthesis; L-valine from pyruvate: step 3/4. Functions in the biosynthesis of branched-chain amino acids. Catalyzes the dehydration of (2R,3R)-2,3-dihydroxy-3-methylpentanoate (2,3-dihydroxy-3-methylvalerate) into 2-oxo-3-methylpentanoate (2-oxo-3-methylvalerate) and of (2R)-2,3-dihydroxy-3-methylbutanoate (2,3-dihydroxyisovalerate) into 2-oxo-3-methylbutanoate (2-oxoisovalerate), the penultimate precursor to L-isoleucine and L-valine, respectively. In Hyphomonas neptunium (strain ATCC 15444), this protein is Dihydroxy-acid dehydratase.